A 336-amino-acid chain; its full sequence is Plant-specific TFIIB-related protein 2 (336 aa).

A TFIIB-type zinc finger spans residues 2–34 (EEETCLDCKRPTIMVVDHSSGDTICSECGLVLE). The Zn(2+) site is built by Cys-6, Cys-9, Cys-26, and Cys-29.

As to expression, specifically expressed in reproductive organs and seeds.

It is found in the nucleus. Plant-specific TFIIB-related protein involved in the regulation of endosperm proliferation during the syncytial phase of endosperm development. Does not contribute to RNA polymerase IV or V activities in reproductive tissues. This chain is Plant-specific TFIIB-related protein 2, found in Arabidopsis thaliana (Mouse-ear cress).